The following is a 1316-amino-acid chain: Tetratricopeptide repeat protein 21B (1316 aa).

19 TPR repeats span residues 108 to 141, 145 to 178, 180 to 211, 285 to 323, 324 to 357, 492 to 525, 563 to 596, 617 to 650, 722 to 755, 757 to 789, 791 to 822, 831 to 864, 884 to 917, 919 to 951, 952 to 985, 1023 to 1056, 1197 to 1230, 1232 to 1264, and 1266 to 1299; these read EKAL…SDGS, HVLK…GNDT, ALLG…FPSF, AQLF…NPQQ, SEFA…DETS, LQTV…NPSY, PLYH…PGMK, LSIF…FSGT, PRSF…NPKD, TLAS…GQKN, LCYD…EPVN, GRCQ…QARV, AEIC…CETD, KIML…DQDN, EAAT…KPDN, PGFQ…RDWG, EKSW…NRSC, KAYE…SNRT, and PAVG…HPTY.

The protein belongs to the TTC21 family. In terms of assembly, component of the IFT complex A (IFT-A) complex. IFT-A complex is divided into a core subcomplex composed of IFT122:IFT140:WDR19 which is associated with TULP3 and a peripheral subcomplex composed of IFT43:WDR35:TTC21B. Interacts directy with WDR35 and TTC21B. Interacts with TTC25.

It localises to the cytoplasm. The protein resides in the cytoskeleton. The protein localises to the cilium axoneme. Component of the IFT complex A (IFT-A), a complex required for retrograde ciliary transport and entry into cilia of G protein-coupled receptors (GPCRs). Essential for retrograde trafficking of IFT-1, IFT-B and GPCRs. Negatively modulates the SHH signal transduction. The sequence is that of Tetratricopeptide repeat protein 21B from Homo sapiens (Human).